The sequence spans 566 residues: OTU domain-containing protein 5 (566 aa).

Disordered stretches follow at residues 1-117 and 145-175; these read MTIL…GDAL and GPGHSKRRRQAPGVGAVGGASPEREEVGAGY. Over residues 11–30 the composition is skewed to pro residues; it reads PPDADPANEPPPPGPLPPAP. Gly residues predominate over residues 34–47; it reads AGVGVGGGGTGVGG. The segment covering 63–75 has biased composition (pro residues); the sequence is ASPPPQGPLPGPP. Ser-64 is modified (phosphoserine). Low complexity predominate over residues 84-97; that stretch reads AVPPGAVAGPRPQQ. Residues 105–115 are compositionally biased toward gly residues; the sequence is GPGGPGGGPGD. Residue Ser-165 is modified to Phosphoserine. Phosphotyrosine is present on Tyr-175. Ser-177 is subject to Phosphoserine. A Phosphothreonine modification is found at Thr-195. The OTU domain maps to 213–336; sequence FIIKQMKEDG…NIHYNSVVNP (124 aa). The tract at residues 218–224 is cys-loop; sequence MKEDGAC. The active site involves Asp-221. The active-site Nucleophile is the Cys-224. A variable-loop region spans residues 273 to 283; the sequence is KRKNNCHGNHI. The residue at position 323 (Ser-323) is a Phosphoserine. A his-loop region spans residues 324-329; the sequence is YHRNIH. The active site involves His-329. Residues Ser-332 and Ser-370 each carry the phosphoserine modification. Residues 413-499 are disordered; sequence ARQVRGPSQP…TSSQFSAGGD (87 aa). Composition is skewed to low complexity over residues 425 to 438 and 445 to 457; these read ASATCSSATAAASS and SRSPRQRSSASSP. Phosphoserine is present on Ser-447. Phosphothreonine is present on Thr-502. Ser-503 carries the post-translational modification Phosphoserine.

This sequence belongs to the peptidase C85 family. Interacts with TRAF3. In terms of processing, phosphorylation at Ser-177 is required for deubiquitinating activity. Phosphorylation at Ser-323, Ser-332 and Ser-503 by MTOR promotes its activity.

Its subcellular location is the nucleus. It carries out the reaction Thiol-dependent hydrolysis of ester, thioester, amide, peptide and isopeptide bonds formed by the C-terminal Gly of ubiquitin (a 76-residue protein attached to proteins as an intracellular targeting signal).. Inhibited by N-ethyl-maleimide (NEM). Deubiquitinating enzyme that functions as a negative regulator of the innate immune system. Has peptidase activity towards 'Lys-48'- and 'Lys-63'-linked polyubiquitin chains. Can also cleave 'Lys-11'-linked ubiquitin chains (in vitro). Acts via TRAF3 deubiquitination and subsequent suppression of type I interferon (IFN) production. Controls neuroectodermal differentiation through cleaving 'Lys-48'-linked ubiquitin chains to counteract degradation of select chromatin regulators such as ARID1A, HDAC2 and HCF1. Acts as a positive regulator of mTORC1 and mTORC2 signaling following phosphorylation by MTOR: acts by mediating deubiquitination of BTRC, leading to its stability. The chain is OTU domain-containing protein 5 from Mus musculus (Mouse).